The chain runs to 307 residues: Oxygen-dependent coproporphyrinogen-III oxidase (307 aa).

Ser-99 serves as a coordination point for substrate. A divalent metal cation contacts are provided by His-103 and His-113. His-113 acts as the Proton donor in catalysis. 115–117 serves as a coordination point for substrate; that stretch reads NVR. His-152 and His-182 together coordinate a divalent metal cation. Positions 247 to 282 are important for dimerization; that stretch reads YVEFNLVFDRGTLFGLQSGGRTESILLSMPPTAGWR. Substrate is bound at residue 265 to 267; the sequence is GGR.

Belongs to the aerobic coproporphyrinogen-III oxidase family. In terms of assembly, homodimer. The cofactor is a divalent metal cation.

Its subcellular location is the cytoplasm. It catalyses the reaction coproporphyrinogen III + O2 + 2 H(+) = protoporphyrinogen IX + 2 CO2 + 2 H2O. Its pathway is porphyrin-containing compound metabolism; protoporphyrin-IX biosynthesis; protoporphyrinogen-IX from coproporphyrinogen-III (O2 route): step 1/1. Involved in the heme biosynthesis. Catalyzes the aerobic oxidative decarboxylation of propionate groups of rings A and B of coproporphyrinogen-III to yield the vinyl groups in protoporphyrinogen-IX. This is Oxygen-dependent coproporphyrinogen-III oxidase from Burkholderia pseudomallei (strain 1106a).